Reading from the N-terminus, the 163-residue chain is Urease accessory protein UreE (163 aa).

The segment at 130–163 (PFEPEPGAYGGGHGHTHSHDHSHQHDPAGHAHEH) is disordered. Residues 146–163 (HSHDHSHQHDPAGHAHEH) show a composition bias toward basic and acidic residues.

The protein belongs to the UreE family.

Its subcellular location is the cytoplasm. Functionally, involved in urease metallocenter assembly. Binds nickel. Probably functions as a nickel donor during metallocenter assembly. The chain is Urease accessory protein UreE from Alkalilimnicola ehrlichii (strain ATCC BAA-1101 / DSM 17681 / MLHE-1).